The chain runs to 453 residues: RuvB-like helicase 1 (453 aa).

71–78 contacts ATP; that stretch reads GGPGTGKT.

The protein belongs to the RuvB family. In terms of assembly, may form heterododecamers with RVB2. Component of the SWR1 chromatin remodeling complex, the INO80 chromatin remodeling complex, and of the R2TP complex.

The protein localises to the nucleus. It catalyses the reaction ATP + H2O = ADP + phosphate + H(+). DNA helicase which participates in several chromatin remodeling complexes, including the SWR1 and the INO80 complexes. The SWR1 complex mediates the ATP-dependent exchange of histone H2A for the H2A variant HZT1 leading to transcriptional regulation of selected genes by chromatin remodeling. The INO80 complex remodels chromatin by shifting nucleosomes and is involved in DNA repair. Also involved in pre-rRNA processing. The sequence is that of RuvB-like helicase 1 (RVB1) from Yarrowia lipolytica (strain CLIB 122 / E 150) (Yeast).